Consider the following 140-residue polypeptide: Ig heavy chain V region 93G7 (140 aa).

Positions 1-19 (MGWSFIFLFLLSVTAGVHS) are cleaved as a signal peptide. The Ig-like domain occupies 20–139 (EVQLQQSGAE…WGQGTPLTVS (120 aa)).

In Mus musculus (Mouse), this protein is Ig heavy chain V region 93G7.